An 859-amino-acid chain; its full sequence is Kinesin-like protein KIN-14T (859 aa).

Positions Asn-91 to Ile-411 constitute a Kinesin motor domain. Gly-168 to Thr-175 is a binding site for ATP. Residues Gln-422–Lys-463 adopt a coiled-coil conformation. Residues Leu-511–Asn-530 form a disordered region. A compositionally biased stretch (polar residues) spans Val-518–Asn-530.

It belongs to the TRAFAC class myosin-kinesin ATPase superfamily. Kinesin family. KIN-14 subfamily.

In Arabidopsis thaliana (Mouse-ear cress), this protein is Kinesin-like protein KIN-14T.